Reading from the N-terminus, the 117-residue chain is Glycoprotein hormones alpha chain (117 aa).

The first 23 residues, 1–23 (MGSVKSAGLSLLLLSFLLYVADS), serve as a signal peptide directing secretion. Intrachain disulfides connect C34-C57, C37-C86, C54-C107, C58-C109, and C85-C112. N-linked (GlcNAc...) asparagine glycans are attached at residues N78 and N103.

This sequence belongs to the glycoprotein hormones subunit alpha family. As to quaternary structure, heterodimer. Glycoprotein hormones are heterodimers composed of a common alpha chain described here and a unique beta chain which confers their biological specificity to the different hormones.

The protein localises to the secreted. Its function is as follows. Shared alpha chain of heterodimeric glycoprotein hormones. These hormones bind specific receptors on target cells that in turn activate downstream signaling pathways. Involved in gametogenesis and steroidogenesis. The chain is Glycoprotein hormones alpha chain (cga) from Acanthopagrus latus (Yellowfin seabream).